A 657-amino-acid chain; its full sequence is Probable cobalt/nickel-exporting P-type ATPase (657 aa).

5 consecutive transmembrane segments (helical) span residues 40–60 (WATVALLLFLAGLVAQLNGAP), 62–82 (AMWWTLYLACYLAGGWGSAWA), 101–121 (AAVGAVAIGQIFDGALLIVIF), 268–288 (LGMVAATLALIVIPLMFGADL), and 299–319 (MIVASPCAVVLATMPPLLSAI). D347 (4-aspartylphosphate intermediate) is an active-site residue. Mg(2+) contacts are provided by D543 and D547. A helical membrane pass occupies residues 596-618 (VVTVNLAIAATFIAVLVLWDLFG).

It belongs to the cation transport ATPase (P-type) (TC 3.A.3) family. Type IB subfamily.

It localises to the cell membrane. Functionally, involved in heavy metal homeostasis. Probably exports nickel and cobalt ions out of the cell. This chain is Probable cobalt/nickel-exporting P-type ATPase (ctpD), found in Mycobacterium bovis (strain ATCC BAA-935 / AF2122/97).